Consider the following 178-residue polypeptide: Small ribosomal subunit protein uS4 (178 aa).

One can recognise an S4 RNA-binding domain in the interval 104–166 (RRLQTIVYRK…PNSPMASENH (63 aa)). The interval 158 to 178 (NSPMASENHPERTAAVSEENQ) is disordered.

The protein belongs to the universal ribosomal protein uS4 family. Part of the 30S ribosomal subunit. Contacts protein S5. The interaction surface between S4 and S5 is involved in control of translational fidelity.

In terms of biological role, one of the primary rRNA binding proteins, it binds directly to 16S rRNA where it nucleates assembly of the body of the 30S subunit. With S5 and S12 plays an important role in translational accuracy. This chain is Small ribosomal subunit protein uS4, found in Methanococcus maripaludis (strain C6 / ATCC BAA-1332).